The primary structure comprises 427 residues: BTB/POZ domain-containing protein KCTD16 (427 aa).

The BTB domain occupies 25-98; it reads EVIELNVGGQ…LRDRQVVLPD (74 aa). Residue Tyr-112 is modified to Phosphotyrosine. Residues Ser-130, Ser-137, Ser-143, and Ser-146 each carry the phosphoserine modification.

Homopentamer; forms an open pentamer. In contrast to other BTB domain-containing proteins, does not interact with CUL3. Interacts as a tetramer with GABBR1 and GABBR2. In terms of tissue distribution, expressed in the brain, mainly in the hippocampus.

The protein localises to the presynaptic cell membrane. The protein resides in the postsynaptic cell membrane. In terms of biological role, auxiliary subunit of GABA-B receptors that determine the pharmacology and kinetics of the receptor response. Increases agonist potency and markedly alter the G-protein signaling of the receptors by accelerating onset and promoting desensitization. The sequence is that of BTB/POZ domain-containing protein KCTD16 (Kctd16) from Mus musculus (Mouse).